Consider the following 335-residue polypeptide: Malate dehydrogenase (335 aa).

11–17 (GAAGQIG) contacts NAD(+). Residues Arg94 and Arg100 each coordinate substrate. Residues Asn107, Gln114, and 131-133 (VGN) contribute to the NAD(+) site. 2 residues coordinate substrate: Asn133 and Arg167. His192 acts as the Proton acceptor in catalysis.

This sequence belongs to the LDH/MDH superfamily. MDH type 2 family.

It catalyses the reaction (S)-malate + NAD(+) = oxaloacetate + NADH + H(+). Catalyzes the reversible oxidation of malate to oxaloacetate. The sequence is that of Malate dehydrogenase from Bdellovibrio bacteriovorus (strain ATCC 15356 / DSM 50701 / NCIMB 9529 / HD100).